We begin with the raw amino-acid sequence, 152 residues long: Flagellar assembly factor FliW (152 aa).

It belongs to the FliW family. In terms of assembly, interacts with translational regulator CsrA and flagellin(s).

Its subcellular location is the cytoplasm. In terms of biological role, acts as an anti-CsrA protein, binds CsrA and prevents it from repressing translation of its target genes, one of which is flagellin. Binds to flagellin and participates in the assembly of the flagellum. The chain is Flagellar assembly factor FliW from Caldicellulosiruptor saccharolyticus (strain ATCC 43494 / DSM 8903 / Tp8T 6331).